The following is a 240-amino-acid chain: ATP-dependent dethiobiotin synthetase BioD (240 aa).

Residue 13–18 (EVGKTV) participates in ATP binding. Thr17 is a binding site for Mg(2+). The active site involves Lys38. A substrate-binding site is contributed by Ser42. ATP-binding positions include Asp55, 116–119 (EGAG), 176–177 (ND), and 205–207 (PWL). Positions 55 and 116 each coordinate Mg(2+).

This sequence belongs to the dethiobiotin synthetase family. In terms of assembly, homodimer. The cofactor is Mg(2+).

It localises to the cytoplasm. The catalysed reaction is (7R,8S)-7,8-diammoniononanoate + CO2 + ATP = (4R,5S)-dethiobiotin + ADP + phosphate + 3 H(+). It functions in the pathway cofactor biosynthesis; biotin biosynthesis; biotin from 7,8-diaminononanoate: step 1/2. In terms of biological role, catalyzes a mechanistically unusual reaction, the ATP-dependent insertion of CO2 between the N7 and N8 nitrogen atoms of 7,8-diaminopelargonic acid (DAPA, also called 7,8-diammoniononanoate) to form a ureido ring. The sequence is that of ATP-dependent dethiobiotin synthetase BioD from Pseudescherichia vulneris (Escherichia vulneris).